We begin with the raw amino-acid sequence, 432 residues long: 5'-deoxyadenosine deaminase (432 aa).

Residues histidine 63 and histidine 65 each coordinate Zn(2+). 2 residues coordinate substrate: glutamate 92 and histidine 184. Histidine 211 is a binding site for Zn(2+). Residues glutamate 214 and aspartate 299 each coordinate substrate. Aspartate 299 is a binding site for Zn(2+).

This sequence belongs to the metallo-dependent hydrolases superfamily. MTA/SAH deaminase family. Homotetramer. Zn(2+) is required as a cofactor.

It carries out the reaction 5'-deoxyadenosine + H2O + H(+) = 5'-deoxyinosine + NH4(+). The enzyme catalyses S-adenosyl-L-homocysteine + H2O + H(+) = S-inosyl-L-homocysteine + NH4(+). It catalyses the reaction S-methyl-5'-thioadenosine + H2O + H(+) = S-methyl-5'-thioinosine + NH4(+). The catalysed reaction is adenosine + H2O + H(+) = inosine + NH4(+). It functions in the pathway amino-acid biosynthesis; S-adenosyl-L-methionine biosynthesis. In terms of biological role, catalyzes the deamination of three SAM-derived enzymatic products, namely 5'-deoxyadenosine, S-adenosyl-L-homocysteine, and 5'-methylthioadenosine, to produce the inosine analogs. Can also deaminate adenosine. The preferred substrate for this enzyme is 5'-deoxyadenosine, but all these substrates are efficiently deaminated. Likely functions in a S-adenosyl-L-methionine (SAM) recycling pathway from S-adenosyl-L-homocysteine (SAH) produced from SAM-dependent methylation reactions. May also be involved in the recycling of 5'-deoxyadenosine, whereupon the 5'-deoxyribose moiety of 5'-deoxyinosine is further metabolized to deoxyhexoses used for the biosynthesis of aromatic amino acids in methanogens. The sequence is that of 5'-deoxyadenosine deaminase from Methanosarcina acetivorans (strain ATCC 35395 / DSM 2834 / JCM 12185 / C2A).